Here is a 222-residue protein sequence, read N- to C-terminus: RING finger protein 141 (222 aa).

The RING-type zinc finger occupies 147–184 (CCICMDGKADLILPCAHSFCQKCIDKWSGQSRNCPVCR).

The sequence is that of RING finger protein 141 (rnf141) from Danio rerio (Zebrafish).